A 123-amino-acid chain; its full sequence is Urotensin-2 (123 aa).

The N-terminal stretch at 1-20 is a signal peptide; that stretch reads MDRVPFCCLLFIGLLNPLLS. 2 consecutive propeptides follow at residues 21 to 104 and 107 to 109; these read LPVT…LART and QHK. The tract at residues 57 to 88 is disordered; it reads RQTMGTEAGESPGEAGPSTETPTPRGSMRKAF. Residues C117 and C122 are joined by a disulfide bond.

Belongs to the urotensin-2 family. In terms of tissue distribution, brain specific. Predominantly expressed in motoneurons of the brainstem and spinal cord.

Its subcellular location is the secreted. Functionally, highly potent vasoconstrictor. The protein is Urotensin-2 (Uts2) of Mus musculus (Mouse).